Here is a 247-residue protein sequence, read N- to C-terminus: Trypsin-4 (247 aa).

The N-terminal stretch at 1-15 (MKISIFFAFLGAAVA) is a signal peptide. Positions 16–23 (LPVNDDDK) are cleaved as a propeptide — activation peptide. In terms of domain architecture, Peptidase S1 spans 24 to 245 (IVGGYTCPKH…YLSWIQETMA (222 aa)). Cystine bridges form between Cys-30–Cys-161, Cys-49–Cys-65, Cys-133–Cys-234, Cys-140–Cys-207, Cys-172–Cys-186, and Cys-197–Cys-221. His-64 serves as the catalytic Charge relay system. Residues Glu-76, Asn-78, Val-81, and Glu-86 each coordinate Ca(2+). Asp-108 serves as the catalytic Charge relay system. Ser-201 serves as the catalytic Charge relay system.

It belongs to the peptidase S1 family. The cofactor is Ca(2+). Proteolytically cleaved and activated by an autocatalytic mechanism. Cleavage by CTRC inhibits autoactivation.

It is found in the secreted. Its subcellular location is the extracellular space. It carries out the reaction Preferential cleavage: Arg-|-Xaa, Lys-|-Xaa.. Activated by autocatalytic cleavage. Cleavage by CTRC inhibits autoactivation. In terms of biological role, serine protease capable of autoactivation. This Rattus norvegicus (Rat) protein is Trypsin-4.